We begin with the raw amino-acid sequence, 122 residues long: Large ribosomal subunit protein bL12 (122 aa).

This sequence belongs to the bacterial ribosomal protein bL12 family. In terms of assembly, homodimer. Part of the ribosomal stalk of the 50S ribosomal subunit. Forms a multimeric L10(L12)X complex, where L10 forms an elongated spine to which 2 to 4 L12 dimers bind in a sequential fashion. Binds GTP-bound translation factors.

Functionally, forms part of the ribosomal stalk which helps the ribosome interact with GTP-bound translation factors. Is thus essential for accurate translation. This chain is Large ribosomal subunit protein bL12, found in Blochmanniella pennsylvanica (strain BPEN).